The primary structure comprises 648 residues: 1-deoxy-D-xylulose-5-phosphate synthase (648 aa).

Residues histidine 73 and 114–116 (SHA) contribute to the thiamine diphosphate site. Aspartate 145 serves as a coordination point for Mg(2+). Residues 146-147 (GA), asparagine 175, tyrosine 286, and glutamate 367 each bind thiamine diphosphate. Asparagine 175 is a binding site for Mg(2+).

It belongs to the transketolase family. DXPS subfamily. Homodimer. It depends on Mg(2+) as a cofactor. The cofactor is thiamine diphosphate.

The catalysed reaction is D-glyceraldehyde 3-phosphate + pyruvate + H(+) = 1-deoxy-D-xylulose 5-phosphate + CO2. Its pathway is metabolic intermediate biosynthesis; 1-deoxy-D-xylulose 5-phosphate biosynthesis; 1-deoxy-D-xylulose 5-phosphate from D-glyceraldehyde 3-phosphate and pyruvate: step 1/1. Catalyzes the acyloin condensation reaction between C atoms 2 and 3 of pyruvate and glyceraldehyde 3-phosphate to yield 1-deoxy-D-xylulose-5-phosphate (DXP). This is 1-deoxy-D-xylulose-5-phosphate synthase from Rhodococcus erythropolis (strain PR4 / NBRC 100887).